Consider the following 204-residue polypeptide: dITP/XTP pyrophosphatase (204 aa).

A substrate-binding site is contributed by 8-13; that stretch reads SRNRKK. The active-site Proton acceptor is D73. Residue D73 coordinates Mg(2+). Substrate is bound by residues S74, 155–158, K179, and 184–185; these read FGYD and HR.

The protein belongs to the HAM1 NTPase family. In terms of assembly, homodimer. Requires Mg(2+) as cofactor.

It carries out the reaction XTP + H2O = XMP + diphosphate + H(+). It catalyses the reaction dITP + H2O = dIMP + diphosphate + H(+). The enzyme catalyses ITP + H2O = IMP + diphosphate + H(+). Its function is as follows. Pyrophosphatase that catalyzes the hydrolysis of nucleoside triphosphates to their monophosphate derivatives, with a high preference for the non-canonical purine nucleotides XTP (xanthosine triphosphate), dITP (deoxyinosine triphosphate) and ITP. Seems to function as a house-cleaning enzyme that removes non-canonical purine nucleotides from the nucleotide pool, thus preventing their incorporation into DNA/RNA and avoiding chromosomal lesions. This chain is dITP/XTP pyrophosphatase, found in Mycolicibacterium paratuberculosis (strain ATCC BAA-968 / K-10) (Mycobacterium paratuberculosis).